The primary structure comprises 201 residues: Small ribosomal subunit protein uS5 (201 aa).

A disordered region spans residues 1–28 (MAGPQRRGSGAGGGERRDRKGRDGGAGA). Residues 14-23 (GERRDRKGRD) are compositionally biased toward basic and acidic residues. In terms of domain architecture, S5 DRBM spans 34 to 97 (YVERVVAINR…EEAKKHFFKV (64 aa)).

Belongs to the universal ribosomal protein uS5 family. As to quaternary structure, part of the 30S ribosomal subunit. Contacts proteins S4 and S8.

Functionally, with S4 and S12 plays an important role in translational accuracy. Its function is as follows. Located at the back of the 30S subunit body where it stabilizes the conformation of the head with respect to the body. The sequence is that of Small ribosomal subunit protein uS5 from Streptomyces coelicolor (strain ATCC BAA-471 / A3(2) / M145).